A 402-amino-acid chain; its full sequence is Peptidyl-prolyl cis-trans isomerase FKBP8 (402 aa).

The span at 28–39 (DGVDDAEEEDDL) shows a compositional bias: acidic residues. A disordered region spans residues 28-54 (DGVDDAEEEDDLSGLPPLEDMGQPTVE). A PPIase FKBP-type domain is found at 110-194 (GQVVTVHLQM…CLEVTLKTAE (85 aa)). Residues 211–244 (ANRKRECGNAHYQRADFVLAANSYDLAIKAITSN) form a TPR 1 repeat. Residues lysine 239, lysine 261, lysine 263, and lysine 274 each participate in a glycyl lysine isopeptide (Lys-Gly) (interchain with G-Cter in ubiquitin) cross-link. 2 TPR repeats span residues 262-295 (VKCLNNLAASQLKLDHYRAALRSCSQVLEHQPDN) and 296-329 (IKALFRKGKVLAQQGEYSEAIPILRAALKLEPSN). A Phosphoserine modification is found at serine 286. Glycyl lysine isopeptide (Lys-Gly) (interchain with G-Cter in ubiquitin) cross-links involve residues lysine 297, lysine 304, lysine 324, lysine 330, lysine 338, lysine 341, and lysine 342. The chain crosses the membrane as a helical span at residues 380–400 (WLFGATAVALGGVALSVVIAA).

Homomultimers or heteromultimers (Potential). Forms heterodimer with calmodulin. When activated by calmodulin and calcium, interacts with the BH4 domain of BCL2 and weakly with BCLX isoform Bcl-X(L). Does not bind and inhibit calcineurin. Interacts with ZFYVE27; may negatively regulate ZFYVE27 phosphorylation. Ca(2+) serves as cofactor. Post-translationally, ubiquitinated by PRKN during mitophagy, leading to its degradation and enhancement of mitophagy. Deubiquitinated by USP30. Detected throughout the embryonic body, in caudal neural tube, limbs and head. Detected in adult retina, brain, heart, kidney, liver, pancreas, lung, testis and urinary bladder (at protein level). Detected in adult brain, kidney, liver, testis and trigeminal nerve, and in embryo. Detected at lower levels in lung, spleen, heart and ovary. Widely expressed in forebrain. Detected in the Purkinje cell layer in the cerebellum and in hippocampus neurons.

It localises to the mitochondrion membrane. The catalysed reaction is [protein]-peptidylproline (omega=180) = [protein]-peptidylproline (omega=0). Constitutively inactive PPiase, which becomes active when bound to calmodulin and calcium. Seems to act as a chaperone for BCL2, targets it to the mitochondria and modulates its phosphorylation state. The BCL2/FKBP8/calmodulin/calcium complex probably interferes with the binding of BCL2 to its targets. The active form of FKBP8 may therefore play a role in the regulation of apoptosis. Required for normal embryonic development. The sequence is that of Peptidyl-prolyl cis-trans isomerase FKBP8 (Fkbp8) from Mus musculus (Mouse).